The sequence spans 439 residues: GlutamylGlutaminyl-tRNA synthetase (439 aa).

A 'HIGH' region motif is present at residues 6–16; the sequence is PSPTGDMHIGN. The 'KMSKS' region signature appears at 232–236; that stretch reads KMSKR. Lys-235 contributes to the ATP binding site.

Belongs to the class-I aminoacyl-tRNA synthetase family. Glutamate--tRNA ligase type 1 subfamily. As to quaternary structure, monomer.

The protein resides in the cytoplasm. It carries out the reaction tRNA(Glu) + L-glutamate + ATP = L-glutamyl-tRNA(Gln) + AMP + diphosphate. In terms of biological role, aminoacylates tRNA(Gln) with glutamate. Does not aminoacylate tRNA(Glu). The polypeptide is GlutamylGlutaminyl-tRNA synthetase (gltX2) (Helicobacter pylori (strain ATCC 700392 / 26695) (Campylobacter pylori)).